We begin with the raw amino-acid sequence, 476 residues long: MGIKFLEVIKPFCAVLPEIQKPERKIQFREKVLWTAITLFIFLVCCQIPLFGIMSSDSADPFYWMRVILASNRGTLMELGISPIVTSGLIMQLLAGAKIIEVGDTPKDRALFNGAQKLFGMIITIGQAIVYVMTGMYGDPSDMGAGICLLIIIQLFVAGLIVLLLDELLQKGYGLGSGISLFIATNICETIVWKAFSPTTVNTGRGTEFEGAIIALFHLLATRTDKVRALREAFYRQNLPNLMNLLATVFVFGVVIYFQGFRVDLPIKSARYRGQYNTYPIKLFYTSNIPIILQSALVSNLYVISQMLSTRFSGNFLVNLLGTWSDTSSGGPARAYPVGGLCYYFSPPESFGSVLDDPIHAAIYICFMLGSCAFFSKTWIEVSGSSAKDVAKQLKEQQMVMRGHRETSMVHELNRYIPTAAAFGGLCIGGLSVMADFLGAIGSGTGILLAVTIIYQYFEIFVKEQSEMGSMGALLF.

The Cytoplasmic segment spans residues 2–33 (GIKFLEVIKPFCAVLPEIQKPERKIQFREKVL). A helical transmembrane segment spans residues 34-53 (WTAITLFIFLVCCQIPLFGI). Topologically, residues 54–76 (MSSDSADPFYWMRVILASNRGTL) are lumenal. The chain crosses the membrane as a helical span at residues 77–96 (MELGISPIVTSGLIMQLLAG). Residues 97–117 (AKIIEVGDTPKDRALFNGAQK) are Cytoplasmic-facing. The chain crosses the membrane as a helical span at residues 118–138 (LFGMIITIGQAIVYVMTGMYG). Residues 139–144 (DPSDMG) are Lumenal-facing. Residues 145 to 165 (AGICLLIIIQLFVAGLIVLLL) form a helical membrane-spanning segment. At 166-172 (DELLQKG) the chain is on the cytoplasmic side. Residues 173–193 (YGLGSGISLFIATNICETIVW) traverse the membrane as a helical segment. The Lumenal portion of the chain corresponds to 194 to 240 (KAFSPTTVNTGRGTEFEGAIIALFHLLATRTDKVRALREAFYRQNLP). Residues 241-261 (NLMNLLATVFVFGVVIYFQGF) form a helical membrane-spanning segment. Topologically, residues 262 to 288 (RVDLPIKSARYRGQYNTYPIKLFYTSN) are cytoplasmic. Residues 289-309 (IPIILQSALVSNLYVISQMLS) form a helical membrane-spanning segment. Over 310-354 (TRFSGNFLVNLLGTWSDTSSGGPARAYPVGGLCYYFSPPESFGSV) the chain is Lumenal. Residues 355–375 (LDDPIHAAIYICFMLGSCAFF) form a helical membrane-spanning segment. The Cytoplasmic segment spans residues 376–420 (SKTWIEVSGSSAKDVAKQLKEQQMVMRGHRETSMVHELNRYIPTA). A helical transmembrane segment spans residues 421-441 (AAFGGLCIGGLSVMADFLGAI). Over 442–445 (GSGT) the chain is Lumenal. A helical transmembrane segment spans residues 446-462 (GILLAVTIIYQYFEIFV). The Cytoplasmic portion of the chain corresponds to 463-476 (KEQSEMGSMGALLF).

It belongs to the SecY/SEC61-alpha family. The SEC61 channel-forming translocon complex consists of channel-forming core components SEC61A1, SEC61B and SEC61G and different auxiliary components such as SEC62 and SEC63.

It localises to the endoplasmic reticulum membrane. Functionally, component of SEC61 channel-forming translocon complex that mediates transport of signal peptide-containing precursor polypeptides across the endoplasmic reticulum (ER). Forms a ribosome receptor and a gated pore in the ER membrane, both functions required for cotranslational translocation of nascent polypeptides. In Oncorhynchus mykiss (Rainbow trout), this protein is Protein transport protein Sec61 subunit alpha isoform B (sec61ab).